A 303-amino-acid polypeptide reads, in one-letter code: MDKGQTLSQTSGRVTFKELKAIIKMGLVQGNLIPAFAGSWLAIVLANHSFLSSIPQILLMLIGSTLIMGGACALNNYYDQDIDRIMPSKQARPTVNDRISNKNLLILSFGMMVIGEIALFILNIPSGVIGLMGIIGYVSFYSIWSKRHTTWNTVIGAFPGAVPPVIGWTAIEGQLSMTAIALFLVIFCWQPIHFYALAIKRQDEYSAANIPMLPSVKGFNRTRIGMFVWLILLLPLPFLLSDLGPVFIGLATLLNLGWIYLGLTSYKKKSDHMKWATLMFVYSLNYLVLFFALVVIISLINMI.

8 helical membrane passes run M25–L45, I54–L74, L104–I124, P125–S145, W151–I171, A179–I199, V228–I248, and F280–I300.

It belongs to the UbiA prenyltransferase family. Protoheme IX farnesyltransferase subfamily. As to quaternary structure, interacts with CtaA.

It localises to the cell membrane. It carries out the reaction heme b + (2E,6E)-farnesyl diphosphate + H2O = Fe(II)-heme o + diphosphate. Its pathway is porphyrin-containing compound metabolism; heme O biosynthesis; heme O from protoheme: step 1/1. Functionally, converts heme B (protoheme IX) to heme O by substitution of the vinyl group on carbon 2 of heme B porphyrin ring with a hydroxyethyl farnesyl side group. This chain is Protoheme IX farnesyltransferase, found in Staphylococcus carnosus (strain TM300).